Here is a 306-residue protein sequence, read N- to C-terminus: D-alanine--D-alanine ligase B (306 aa).

Active-site residues include Glu15 and Ser150. In terms of domain architecture, ATP-grasp spans 101 to 303; the sequence is KLLWQGAGLP…FSQLVVRILE (203 aa). 134 to 189 serves as a coordination point for ATP; sequence ISSLGLPVIVKPSREGSSVGMSKVVAENALQDALRLAFQHDEEVLIEKWLSGPEFT. Residues Asp257, Glu270, and Asn272 each coordinate Mg(2+). Residue Ser281 is part of the active site.

It belongs to the D-alanine--D-alanine ligase family. As to quaternary structure, monomer. The cofactor is Mg(2+). Mn(2+) is required as a cofactor.

The protein localises to the cytoplasm. The enzyme catalyses 2 D-alanine + ATP = D-alanyl-D-alanine + ADP + phosphate + H(+). It functions in the pathway cell wall biogenesis; peptidoglycan biosynthesis. In terms of biological role, cell wall formation. The sequence is that of D-alanine--D-alanine ligase B from Escherichia coli O6:H1 (strain CFT073 / ATCC 700928 / UPEC).